The primary structure comprises 508 residues: Anthranilate synthase component 1 (508 aa).

Residues serine 49 and 282 to 284 (PYM) contribute to the L-tryptophan site. 317–318 (GT) serves as a coordination point for chorismate. Glutamate 344 provides a ligand contact to Mg(2+). Residues tyrosine 432, arginine 452, 466–468 (GAG), and glycine 468 contribute to the chorismate site. Residue glutamate 481 coordinates Mg(2+).

Belongs to the anthranilate synthase component I family. In terms of assembly, heterotetramer consisting of two non-identical subunits: a beta subunit (TrpG) and a large alpha subunit (TrpE). Requires Mg(2+) as cofactor.

The catalysed reaction is chorismate + L-glutamine = anthranilate + pyruvate + L-glutamate + H(+). Its pathway is amino-acid biosynthesis; L-tryptophan biosynthesis; L-tryptophan from chorismate: step 1/5. Its activity is regulated as follows. Feedback inhibited by tryptophan. Functionally, part of a heterotetrameric complex that catalyzes the two-step biosynthesis of anthranilate, an intermediate in the biosynthesis of L-tryptophan. In the first step, the glutamine-binding beta subunit (TrpG) of anthranilate synthase (AS) provides the glutamine amidotransferase activity which generates ammonia as a substrate that, along with chorismate, is used in the second step, catalyzed by the large alpha subunit of AS (TrpE) to produce anthranilate. In the absence of TrpG, TrpE can synthesize anthranilate directly from chorismate and high concentrations of ammonia. In Bacillus caldotenax, this protein is Anthranilate synthase component 1 (trpE).